The sequence spans 197 residues: Protein jagunal (197 aa).

At 1 to 39 (MATRGGPMVAGTDGNDFEFRQRVAGTYQISLLNKSRLKY) the chain is on the cytoplasmic side. A helical membrane pass occupies residues 40–60 (CIFFHALLFFVMLAKLTSDIL). Residues 61-78 (DHLDIFVLEIEELEVPPP) lie on the Lumenal side of the membrane. A helical transmembrane segment spans residues 79–99 (LWWEYVWAASLLTSFLGLSAA). Over 100–109 (RGNKVREMQK) the chain is Cytoplasmic. The chain crosses the membrane as a helical span at residues 110 to 130 (YMVAILLFAILPLFYCFAYYF). The Lumenal segment spans residues 131-159 (SDVWEFATLDKSVELDETDIFVWRGYPYG). A helical membrane pass occupies residues 160–180 (VFWYAFCFVGFQVHGFTLYFA). At 181-197 (YNLVKAWKARTATRKFQ) the chain is on the cytoplasmic side.

It belongs to the jagunal family.

It localises to the endoplasmic reticulum membrane. Required for endoplasmic reticulum organization and proper vesicular traffic during vitellogenesis. Required for oocyte and bristle growth. The polypeptide is Protein jagunal (Drosophila melanogaster (Fruit fly)).